An 805-amino-acid polypeptide reads, in one-letter code: Na(+)/H(+) antiporter subunit A1 (805 aa).

20 helical membrane passes run 1–21 (MSLLHIAVLLPLIFALIIPFV), 30–50 (LGWFVLPIPVVLFIYFLSYIS), 79–99 (LGLLFSLLITGIGCLIVLYSI), 117–137 (LFMGAMLGLVLSDNLIILYLF), 166–186 (MLVTVFGGLSLLGGIILLSIA), 201–221 (EIQTSPFFIFSMILVLIGAMT), 226–246 (FPFYVWLPDAMEAPTPVSAYL), 265–285 (IFAVSQGWIWTVTAVGLITLF), 300–320 (ILAFSTVSQLGMIMAMLGVGA), 337–357 (FTAAIFHLINHATFKGALFMI), 377–397 (LTIMPISFTITLITSLSMAGI), 427–447 (LGILIPITAIIGSVFTFVYSI), 480–500 (ILAILVIVFGLFPAILSGSII), 531–551 (LGIYIVGIVLIITFSYWIYLL), 591–611 (LVIIFASLIVIALVTLLVTPF), 623–643 (PFELIIVVLIITAASMIIFAK), 646–666 (LFSIIMASAVGYSVAIFFIFF), 671–691 (LALTQFVVESISTALFLLCFY), 707–727 (LVNIVISVGAGIVVTVLGLIA), and 766–786 (TLFESSVLGIAGLGVYTMIKL).

It belongs to the CPA3 antiporters (TC 2.A.63) subunit A family. In terms of assembly, may form a heterooligomeric complex that consists of seven subunits: mnhA1, mnhB1, mnhC1, mnhD1, mnhE1, mnhF1 and mnhG1.

Its subcellular location is the cell membrane. Functionally, mnh complex is a Na(+)/H(+) antiporter involved in Na(+) excretion. In Staphylococcus saprophyticus subsp. saprophyticus (strain ATCC 15305 / DSM 20229 / NCIMB 8711 / NCTC 7292 / S-41), this protein is Na(+)/H(+) antiporter subunit A1 (mnhA1).